Here is a 275-residue protein sequence, read N- to C-terminus: Low affinity immunoglobulin gamma Fc region receptor III-A (275 aa).

The signal sequence occupies residues Met-1–Ala-23. The Extracellular portion of the chain corresponds to Gly-24–Gln-207. Ig-like C2-type domains follow at residues Ala-28–Gln-92 and Pro-101–Thr-192. Disulfide bonds link Cys-49–Cys-91 and Cys-131–Cys-175. N-linked (GlcNAc...) asparagine glycans are attached at residues Asn-65, Asn-168, and Asn-183. Residues Ile-208–Val-228 form a helical membrane-spanning segment. Over Gln-229 to Arg-275 the chain is Cytoplasmic. The tract at residues Ala-237–Arg-275 is disordered. Phosphotyrosine is present on Tyr-239. A compositionally biased stretch (basic and acidic residues) spans Pro-242–Ser-261. Polar residues predominate over residues Phe-262–Arg-275.

Forms a heterooligomeric complex with ITAM-containing signaling subunits FCER1G. Interacts (via transmembrane domain) with signaling subunits; this interaction is a prerequisite for receptor complex expression on the cell surface and intracellular signal transduction. Binds the Fc region of antigen-complexed IgG. Post-translationally, N-glycosylated. In terms of processing, phosphorylated following receptor ligation.

The protein localises to the cell membrane. Receptor for the invariable Fc fragment of immunoglobulin gamma (IgG). Binds with intermediate affinity to both IgG2a and IgG2b. Can bind to IgG2a and IgG2b monomers. Does not display binding to IgG1 or IgG3. Recognizes neutralizing virus-specific IgGs displayed on the cell surface of infected cells and triggers antibody-dependent cellular cytotoxicity (ADCC). Confers protection to lethal influenza virus infection. On splenic dendritic cells, uptakes antigen immune complexes and efficiently divert them into MHC class I and II antigen presentation pathways to provide for superior priming of CD4-positive and CD8-positive T cell immune responses. Mediates neutrophil activation by IgG complexes redundantly with FCGR2A. Plays a role in promoting bone resorption by enhancing osteoclast differentiation following binding to IgG2a. Also acts as a receptor for the Fc region of immunoglobulin epsilon (IgE). Binds with low affinity to both the a and b allotypes of IgE. Has also been shown to bind to IgE allotype a only but not to allotype b. Binds aggregated IgE but not the monomeric form and bound monomeric IgG is readily displaced by IgE complexes. Binding to IgE promotes macrophage-mediated phagocytosis, antigen presentation to T cells, production of pro-inflammatory cytokines and the late phase of cutaneous allergic reactions. Mediates enhanced ADCC in response to afucosylated IgGs. In Cricetulus griseus (Chinese hamster), this protein is Low affinity immunoglobulin gamma Fc region receptor III-A.